The sequence spans 637 residues: 1-deoxy-D-xylulose-5-phosphate synthase (637 aa).

Thiamine diphosphate contacts are provided by residues histidine 73 and 113–115 (SHA). Aspartate 144 provides a ligand contact to Mg(2+). Residues 145–146 (GA), asparagine 174, tyrosine 285, and glutamate 366 each bind thiamine diphosphate. Asparagine 174 provides a ligand contact to Mg(2+).

This sequence belongs to the transketolase family. DXPS subfamily. As to quaternary structure, homodimer. Requires Mg(2+) as cofactor. Thiamine diphosphate serves as cofactor.

It carries out the reaction D-glyceraldehyde 3-phosphate + pyruvate + H(+) = 1-deoxy-D-xylulose 5-phosphate + CO2. Its pathway is metabolic intermediate biosynthesis; 1-deoxy-D-xylulose 5-phosphate biosynthesis; 1-deoxy-D-xylulose 5-phosphate from D-glyceraldehyde 3-phosphate and pyruvate: step 1/1. In terms of biological role, catalyzes the acyloin condensation reaction between C atoms 2 and 3 of pyruvate and glyceraldehyde 3-phosphate to yield 1-deoxy-D-xylulose-5-phosphate (DXP). This chain is 1-deoxy-D-xylulose-5-phosphate synthase, found in Streptomyces griseus subsp. griseus (strain JCM 4626 / CBS 651.72 / NBRC 13350 / KCC S-0626 / ISP 5235).